The primary structure comprises 932 residues: Ribosome biogenesis protein ERB1 (932 aa).

The segment covering methionine 1 to glycine 18 has biased composition (low complexity). Residues methionine 1 to leucine 229 form a disordered region. Residues proline 27 to alanine 36 show a composition bias toward polar residues. 2 stretches are compositionally biased toward acidic residues: residues valine 57–serine 119 and aspartate 150–glutamate 172. Positions serine 175–serine 184 are enriched in low complexity. 2 WD repeats span residues proline 555–serine 594 and alanine 604–lysine 644. The interval serine 679 to alanine 698 is disordered. WD repeat units lie at residues serine 762–threonine 800, serine 803–lysine 842, tyrosine 846–glutamate 885, and lysine 901–threonine 932.

Belongs to the WD repeat BOP1/ERB1 family. In terms of assembly, component of the NOP7 complex, composed of ERB1, NOP7 and YTM1. The complex is held together by ERB1, which interacts with NOP7 via its N-terminal domain and with YTM1 via a high-affinity interaction between the seven-bladed beta-propeller domains of the 2 proteins. The NOP7 complex associates with the 66S pre-ribosome.

The protein resides in the nucleus. It localises to the nucleolus. The protein localises to the nucleoplasm. Functionally, component of the NOP7 complex, which is required for maturation of the 25S and 5.8S ribosomal RNAs and formation of the 60S ribosome. The chain is Ribosome biogenesis protein ERB1 from Mycosarcoma maydis (Corn smut fungus).